Here is a 3255-residue protein sequence, read N- to C-terminus: MATLDNCTQVHHMFAYNREHGTNYTRNHFRRYLAAQRIGFYYDWDDDVYECPTCEAIYHSLDDIKNWHECDPPAFDLNDFITDARLKSAPVPDLGPVIIEIPKAEEKQELNFFAATPAPEVSQWKCRGLQFGSFTELETSEPVASAPEPKCEEPARTIAKPEESVEQETRGDGKRLLQAQMEVDKAEQDLAFACLNASLKPRLEGRTTATIARRRDGCLVYKTKPSWSQRRRAKKTLKVDTLACENPYIPAIVDKISIAGGSSASVMHEQQKPKTLHTTPSRKVATHYKRTVMNQQTLMAFINQVGTILLNAEKEFEVVGCRKQKVTGKGTRHNGVRLVKLKTAHEEGHRRRVDIRIPNGLRPIVMRISARGGWHRTWTDSELSPGSSGYVLNSSKIIGKFGLRRHSIFVVRGRVDGEVIDSQSKVTHSITHRMVQYSDVARNFWNGYSTCFMHNTPKDILHTCTSDFDVKECGTVAALLTQTLFQFGKITCEKCAIEYKNLTRDELATRVNKEIDGTIISIQTQHPRFVHVLNFLRLIKQVLNAKNGNFGAFQETERIIGDRMDAPFSHVNKLNAIVIKGNQATSDEMAQASNHVLEIARYLKNRTENIQKGSLKSFRNKISGKAHLNPSLMCDNQLDKNGGFEWGQRSYHAKRFFDGYFETIDPSDGYSKYTIRRNPNGHRKLAIGNLIVSTNFESHRRSMIGESIEDPGLTNQCVSKEGDTFIYPCCCVTDEYGKPTLSEIKMPTKHHLVLGNAGDPKYVDLPKEAEGKMFVTKDGYCYINIFLAMLVDVPEDQAKDFTKMAREIAVKQLGEWPSMMDVATACNILATFHPDTRRSELPRILVDHATKTFHVIDSYGSITTGFHILKANTVTQLVKFAHESLESEMQHYRVGGEPDKAPRKPAGSVPTLGISDLRDLGVELENEEHSIRPNLQRLIKAIYRPRMMRSLLTEEPYLLILSIVSPGVLMALYNSGSLERTMHEFLQTDQRLSATAQILKHLAKKVSLAKTLTIQNAILEGGAGSLNEILDAPAGRSLSYRLAKQTVEVMMARSDMDKELVDVGFSVLRDQKNELIEKSYLMDLEDSWHALPLCGKLSAMRASRRWRDTSTPEVIPTGAADLKGRYSISVGSVSKSAILHLKGICSGAVKRVRDKWVGVQVQGVKWLAKSVHYMIPELTNILNVGTLLLTLISLGVAFRNLTGQFKEMKHKETLAKEEELRKRIRTYNSTYYEIHGKHADAKQITKFITHHDPKLLEVVEFYEGPEEEEVEHQAKREDQANLERIIAFTALVMMMFDSERSDCVYRSLSKLKSLVSTCEDDVRHQSVDEIIDLFDEKKETIDFEIEGKELYSSRVVDSTFSKWWDNQLVRGNTMAHYRTEGHFMTFTRETAASVAAEIAHNEYRDILLQGGVGSGKSTGLPFHLHRKGGVLLIEPTRPLAQNVYKQLGSSPFHLSPNLRMRGSCKFGSSQVTVATSGYALHFIANNAQSLKAYDFIIFDECHVLDASAMAFRCLLQEFEYQGKIIKVSATPPGRKLDFKPMHMVDIATENELSIQQFVQGQGTGVNCDATKKGDNILVYVSSYNEVDMLSKMLNDKGYKVTKVDGRTMKLGSVEVETVGTPQRKHFVVATNIIENGVTLDVDVVVDFGQKVVPILDSEHRMIRYTKKSITYGERIQRVGRVGRNKAGSAIRIGSTEMGTEEIPASIATEAAFLCFTYGLPVMTSNVSTSVLGNCTVRQARTMQKFELSPFFMVDLVHHDGTIHPAINSLLKQFKLKESDIKLSTLAIPNAVTTFWKSAREYNSLGARTTIDDAAKIPFMIKDVPEHLQEKLWETIQQYKGDAGFGRCTSANACKIAYTLSVSPFMIPATINKIDALMAEERQKMEYFQTVTANTCTISNFSISSIGDMIRSRYSTNHSRENLQKLQAVRDTIINFECQAGTGDGGSFDMETAQKLAEEYGCIDVIYHQSKEALSKRLGLKGRWNQSLICKDLLVFCGVAIGGTWMMFQSFKDGMADAVRHQGKGKRQRQKLRYRQARDNKVGIEVYGDDATMEHYFGAAYTEKGKKSGKTKGMGTKNRRFVNMYGYNPEDFSFIRFLDPLTGKTMDEQVFSDISLVQDAFSKERLKLLSEGEIESEHMRNGIRAYLVKNLTTAALEIDMTPHNSCQLGAKTNNIAGYVDREYELRQTGEARVVAPALIPKDNPITDEDIPVKHESKTLFRGLRDYNPIAAAICLLTNESDGMKETMYGIGFGNTIITNQHLFRRNNGVLRVQSRHGEYVLPNTTQLKVLPCEGRDIMVIILTPDFPPFPQKLKFRPPIKGEKICLVGSLFQDKSITSTVSETSVTTPVDNSFLWKHWITTKDGHCGLPLVSSNDGYIVGIHSATSSRQTQNYHAAMPEDFHQTHLIDPASKSWVKHWKYNPDNMVWGGINLINSTPREPFKINKLVTDLFGDAVQFQSKQDEWFASQLKGNLKAVGKSTSQLVTKHTVKGKCMMFELYLQTHEEEKEFFKPLMGAYQKSRLNREAFTKDIMKYSTPITVGIVDCDTFLKAEEGVIKRLERLGFSGCEYVTDEEAIFQALNMKAAVGALYSGKKRDYFEGYGPEEKENILRESCKRLYTGKFGVWNGSLKSELRPMEKVMANKTRVFTAAPLDTLLAGKVCVDDFNNYFYSKNIEAPWTVGMTKFYGGWNELLTKLPDGWVYCDADGSQFDSSLSPFLINSVLRIRLKFMEDWDLGEQMLKNLYTEIVYTAILTPDSTIVKKFKGNNSGQPSTVVDNTLMVVLAMTYTLHKLGFEDEEQDSMCKYFVNGDDLIIAIKPEHESLLDQFQHCFKSLGLNYDFNSRTRKKEELWFMSHCGIKKDGIFIPKLEPERIVSILEWDRSDQPVHRLEAICAAMIESWGYDKLTHEIRKFYKWCLEQAPYADLAKAGKAPYIAECALKRLYTSKEASEAELEKYMEAIRSLVNDEDDDDMDEVYHQVDAKLDAGQGSKTDDKQKNSADPKDNIITEKGSGSGQMKKDDDINAGLHGKHTIPRTKAITQKMKLPMIRGKVALNLDHLLEYEPNQRDISNTRATQKQYESWYDGVKNDYDVDDSGMQLILNGLMVWCIENGTSPNINGTWVMMDGEEQVEYALKPIIEHAKPTFRQIMAHFSDAAEAYIEMRNKKKPYMPRYGRLRGLNDMGLARYAFDFYETTSATPNRAREAHNQMKAAALVGTQNRLFGMDGGGSTQEENTERHTAADVNQNMHTLLGVRGLH.

The Peptidase S30 domain occupies 292-437; the sequence is VMNQQTLMAF…HSITHRMVQY (146 aa). Catalysis depends on for P1 proteinase activity residues H345, D354, and S388. An Involved in interaction with stylet and aphid transmission motif is present at residues 489–492; the sequence is KITC. The short motif at 747–749 is the Involved in virions binding and aphid transmission element; it reads PTK. A Peptidase C6 domain is found at 773–895; the sequence is MFVTKDGYCY…ESEMQHYRVG (123 aa). Residues C781 and H854 each act as for helper component proteinase activity in the active site. The Helicase ATP-binding domain maps to 1397–1549; the sequence is EIAHNEYRDI…PMHMVDIATE (153 aa). Residue 1410-1417 participates in ATP binding; sequence GGVGSGKS. A DECH box motif is present at residues 1499–1502; sequence DECH. One can recognise a Helicase C-terminal domain in the interval 1568-1727; the sequence is DATKKGDNIL…GLPVMTSNVS (160 aa). Residues 2062-2069 carry the Nuclear localization signal motif; the sequence is EKGKKSGK. O-(5'-phospho-RNA)-tyrosine is present on Y2084. Residues 2215–2433 enclose the Peptidase C4 domain; that stretch reads SKTLFRGLRD…MVWGGINLIN (219 aa). Catalysis depends on for nuclear inclusion protein A activity residues H2260, D2295, and C2365. The 125-residue stretch at 2699 to 2823 folds into the RdRp catalytic domain; the sequence is WVYCDADGSQ…AIKPEHESLL (125 aa). Positions 2980–3028 are disordered; it reads AKLDAGQGSKTDDKQKNSADPKDNIITEKGSGSGQMKKDDDINAGLHGK. Over residues 2989–3005 the composition is skewed to basic and acidic residues; it reads KTDDKQKNSADPKDNII. Phosphothreonine is present on T3237.

The protein belongs to the potyviridae genome polyprotein family. In terms of assembly, interacts with host eIF4E protein (via cap-binding region); this interaction mediates the translation of the VPg-viral RNA conjugates. Part of a complex that comprises VPg, RNA, host EIF4E and EIF4G; this interaction mediates the translation of the VPg-viral RNA conjugates. VPg is uridylylated by the polymerase and is covalently attached to the 5'-end of the genomic RNA. This uridylylated form acts as a nucleotide-peptide primer for the polymerase. Post-translationally, potyviral RNA is expressed as two polyproteins which undergo post-translational proteolytic processing. Genome polyprotein is processed by NIa-pro, P1 and HC-pro proteinases resulting in the production of at least ten individual proteins. P3N-PIPO polyprotein is cleaved by P1 and HC-pro proteinases resulting in the production of three individual proteins. The P1 proteinase and the HC-pro cleave only their respective C-termini autocatalytically. 6K1 is essential for proper proteolytic separation of P3 from CI.

It localises to the host cytoplasmic vesicle. It is found in the host nucleus. The protein resides in the virion. It catalyses the reaction RNA(n) + a ribonucleoside 5'-triphosphate = RNA(n+1) + diphosphate. The enzyme catalyses Hydrolyzes glutaminyl bonds, and activity is further restricted by preferences for the amino acids in P6 - P1' that vary with the species of potyvirus, e.g. Glu-Xaa-Xaa-Tyr-Xaa-Gln-|-(Ser or Gly) for the enzyme from tobacco etch virus. The natural substrate is the viral polyprotein, but other proteins and oligopeptides containing the appropriate consensus sequence are also cleaved.. It carries out the reaction Hydrolyzes a Gly-|-Gly bond at its own C-terminus, commonly in the sequence -Tyr-Xaa-Val-Gly-|-Gly, in the processing of the potyviral polyprotein.. In terms of biological role, required for aphid transmission and also has proteolytic activity. Only cleaves a Gly-Gly dipeptide at its own C-terminus. Interacts with virions and aphid stylets. Acts as a suppressor of RNA-mediated gene silencing, also known as post-transcriptional gene silencing (PTGS), a mechanism of plant viral defense that limits the accumulation of viral RNAs. May have RNA-binding activity. Its function is as follows. Has helicase activity. It may be involved in replication. Indispensable for virus replication. Reduces the abundance of host transcripts related to jasmonic acid biosynthesis therefore altering the host defenses. In order to increase its own stability, decreases host protein degradation pathways. Functionally, indispensable for virus replication. In terms of biological role, mediates the cap-independent, EIF4E-dependent translation of viral genomic RNAs. Binds to the cap-binding site of host EIF4E and thus interferes with the host EIF4E-dependent mRNA export and translation. VPg-RNA directly binds EIF4E and is a template for transcription. Also forms trimeric complexes with EIF4E-EIF4G, which are templates for translation. Its function is as follows. Has RNA-binding and proteolytic activities. An RNA-dependent RNA polymerase that plays an essential role in the virus replication. Functionally, involved in aphid transmission, cell-to-cell and systemis movement, encapsidation of the viral RNA and in the regulation of viral RNA amplification. The chain is Genome polyprotein from Lettuce mosaic virus (strain 0 / isolate French) (LMV).